The chain runs to 229 residues: Potassium/proton antiporter CemA (229 aa).

3 helical membrane passes run phenylalanine 7 to phenylalanine 27, methionine 106 to tryptophan 126, and isoleucine 189 to isoleucine 209.

It belongs to the CemA family.

Its subcellular location is the plastid membrane. It catalyses the reaction K(+)(in) + H(+)(out) = K(+)(out) + H(+)(in). Its function is as follows. May be involved in proton extrusion. In Cuscuta reflexa (Southern Asian dodder), this protein is Potassium/proton antiporter CemA.